The primary structure comprises 57 residues: Aspartyl-phosphate phosphatase YnzD (57 aa).

Belongs to the spo0E family.

In terms of biological role, aspartyl-phosphate phosphatase which specifically dephosphorylates the sporulation transcription factor Spo0A-P and negatively regulates the sporulation initiation pathway in order to control the proper timing of sporulation. The sequence is that of Aspartyl-phosphate phosphatase YnzD (ynzD) from Bacillus subtilis (strain 168).